A 350-amino-acid polypeptide reads, in one-letter code: Biotin synthase (350 aa).

Residues 54–278 enclose the Radical SAM core domain; sequence REIQLSTLLS…TMPQSYVRLS (225 aa). Residues Cys-69, Cys-73, and Cys-76 each coordinate [4Fe-4S] cluster. [2Fe-2S] cluster is bound by residues Cys-113, Cys-144, Cys-204, and Arg-276.

Belongs to the radical SAM superfamily. Biotin synthase family. Homodimer. [4Fe-4S] cluster is required as a cofactor. [2Fe-2S] cluster serves as cofactor.

It catalyses the reaction (4R,5S)-dethiobiotin + (sulfur carrier)-SH + 2 reduced [2Fe-2S]-[ferredoxin] + 2 S-adenosyl-L-methionine = (sulfur carrier)-H + biotin + 2 5'-deoxyadenosine + 2 L-methionine + 2 oxidized [2Fe-2S]-[ferredoxin]. The protein operates within cofactor biosynthesis; biotin biosynthesis; biotin from 7,8-diaminononanoate: step 2/2. Its function is as follows. Catalyzes the conversion of dethiobiotin (DTB) to biotin by the insertion of a sulfur atom into dethiobiotin via a radical-based mechanism. In Neisseria meningitidis serogroup A / serotype 4A (strain DSM 15465 / Z2491), this protein is Biotin synthase.